The primary structure comprises 351 residues: Soluble interferon alpha/beta receptor OPG204 (351 aa).

The signal sequence occupies residues 1 to 19 (MTMKMMVHIYFVSLLLLLF). Ig-like C2-type domains follow at residues 65–147 (LGEP…RSHI) and 155–237 (PKTY…IVVS). 2 disulfides stabilise this stretch: Cys73-Cys129 and Cys172-Cys221. Residues Asn117, Asn182, Asn261, Asn269, and Asn321 are each glycosylated (N-linked (GlcNAc...) asparagine; by host). The region spanning 246–345 (PSQDHRFKLI…HNYYFEKTLT (100 aa)) is the Ig-like V-type domain. Cys272 and Cys333 form a disulfide bridge.

This sequence belongs to the interleukin-1 receptor family. Interacts with host IFNA1.

Its subcellular location is the secreted. Its function is as follows. Counteracts the antiviral effects of host IFN-alpha/beta and key IFN-inducible proteins involved in viral RNA degradation suxh as host OAS1. Acts as a soluble IFN-alpha receptor and thus inhibits the interaction between host IFN-alpha and its receptor. This Vaccinia virus (strain Western Reserve) (VACV) protein is Soluble interferon alpha/beta receptor OPG204 (OPG204).